Here is a 786-residue protein sequence, read N- to C-terminus: Protein SEY1 (786 aa).

The Cytoplasmic portion of the chain corresponds to Met1–Arg684. The 228-residue stretch at Gly35 to Tyr262 folds into the GB1/RHD3-type G domain. Residue Gly45 to Ser52 coordinates GTP. Residues Lys355–Glu375 are a coiled coil. The helical transmembrane segment at Ile685–Leu705 threads the bilayer. At Arg706–Pro708 the chain is on the lumenal side. Residues Ala709–Leu729 form a helical membrane-spanning segment. Topologically, residues Trp730 to Leu786 are cytoplasmic. The disordered stretch occupies residues Ile765–Leu786.

Belongs to the TRAFAC class dynamin-like GTPase superfamily. GB1/RHD3 GTPase family. RHD3 subfamily.

The protein localises to the endoplasmic reticulum membrane. Its function is as follows. Cooperates with the reticulon proteins and tubule-shaping DP1 family proteins to generate and maintain the structure of the tubular endoplasmic reticulum network. Has GTPase activity, which is required for its function in ER organization. This Kluyveromyces lactis (strain ATCC 8585 / CBS 2359 / DSM 70799 / NBRC 1267 / NRRL Y-1140 / WM37) (Yeast) protein is Protein SEY1.